A 616-amino-acid chain; its full sequence is Methylmalonyl-CoA mutase small subunit (616 aa).

It belongs to the methylmalonyl-CoA mutase family. As to quaternary structure, heterodimer of an alpha and a beta chain. It depends on adenosylcob(III)alamin as a cofactor.

It catalyses the reaction (R)-methylmalonyl-CoA = succinyl-CoA. It participates in metabolic intermediate metabolism; propanoyl-CoA degradation; succinyl-CoA from propanoyl-CoA: step 3/3. Its function is as follows. Catalyzes the isomerization of succinyl-CoA to methylmalonyl-CoA during synthesis of propionate from tricarboxylic acid-cycle intermediates. This conversion most likely represents an important source of building blocks for polyketide antibiotic biosynthesis. It is unable to catalyze the conversion of isobutyryl-CoA into N-butyryl-CoA. This chain is Methylmalonyl-CoA mutase small subunit (mutA), found in Streptomyces virginiae (Streptomyces cinnamonensis).